The chain runs to 438 residues: Trigger factor (438 aa).

In terms of domain architecture, PPIase FKBP-type spans 162-247 (GDIVTIDFEG…VKEIKVKELP (86 aa)).

Belongs to the FKBP-type PPIase family. Tig subfamily.

It localises to the cytoplasm. It catalyses the reaction [protein]-peptidylproline (omega=180) = [protein]-peptidylproline (omega=0). In terms of biological role, involved in protein export. Acts as a chaperone by maintaining the newly synthesized protein in an open conformation. Functions as a peptidyl-prolyl cis-trans isomerase. This is Trigger factor from Caldicellulosiruptor saccharolyticus (strain ATCC 43494 / DSM 8903 / Tp8T 6331).